The primary structure comprises 393 residues: Arginine biosynthesis bifunctional protein ArgJ (393 aa).

Residues T142, K168, T179, E265, N388, and T393 each coordinate substrate. The active-site Nucleophile is T179.

This sequence belongs to the ArgJ family. In terms of assembly, heterotetramer of two alpha and two beta chains.

Its subcellular location is the cytoplasm. The catalysed reaction is N(2)-acetyl-L-ornithine + L-glutamate = N-acetyl-L-glutamate + L-ornithine. It catalyses the reaction L-glutamate + acetyl-CoA = N-acetyl-L-glutamate + CoA + H(+). It functions in the pathway amino-acid biosynthesis; L-arginine biosynthesis; L-ornithine and N-acetyl-L-glutamate from L-glutamate and N(2)-acetyl-L-ornithine (cyclic): step 1/1. Its pathway is amino-acid biosynthesis; L-arginine biosynthesis; N(2)-acetyl-L-ornithine from L-glutamate: step 1/4. Its function is as follows. Catalyzes two activities which are involved in the cyclic version of arginine biosynthesis: the synthesis of N-acetylglutamate from glutamate and acetyl-CoA as the acetyl donor, and of ornithine by transacetylation between N(2)-acetylornithine and glutamate. This is Arginine biosynthesis bifunctional protein ArgJ from Geobacter sulfurreducens (strain ATCC 51573 / DSM 12127 / PCA).